The primary structure comprises 629 residues: Proteoglycan Cow (629 aa).

An N-terminal signal peptide occupies residues 1 to 27 (MKHSPLIASACLALVLMSSSLIGSTEA). 2 disordered regions span residues 118–186 (KRRV…ESKE) and 198–223 (GDKQ…DDDE). The span at 128–143 (DSQDAEDINNDDEDNS) shows a compositional bias: acidic residues. Asparagine 142 carries an N-linked (GlcNAc...) asparagine glycan. The span at 144 to 159 (SDGGSSNSSPTGTNNA) shows a compositional bias: low complexity. The span at 167-186 (EETDDEDKSLSLGDDDESKE) shows a compositional bias: acidic residues. The 52-residue stretch at 222–273 (DEELDNCKPCPVAKPTFLCGADNRTYSSLCRLDYHNCIHSTSIRIACKGFCP) folds into the Kazal-like domain. 3 disulfide bridges follow: cysteine 228–cysteine 258, cysteine 231–cysteine 251, and cysteine 240–cysteine 272. Asparagine 244 carries N-linked (GlcNAc...) asparagine glycosylation. The disordered stretch occupies residues 298-356 (SLDQQQQQQQQQQQQQQQQQAYKDSNNNNIMMNSGNIMGGNNNDFNTIMNDKEDNNRHN). Residues 301-340 (QQQQQQQQQQQQQQQQQAYKDSNNNNIMMNSGNIMGGNNN) are compositionally biased toward low complexity. EF-hand domains lie at 468 to 503 (ACKT…QNER) and 508 to 535 (FIDT…TDRP). The Ca(2+) site is built by aspartate 481, asparagine 483, aspartate 485, glutamine 487, and glutamate 492. The Thyroglobulin type-1 domain occupies 533-594 (DRPCAAVRRR…NTRTRGKPNC (62 aa)). 3 disulfide bridges follow: cysteine 536-cysteine 555, cysteine 566-cysteine 573, and cysteine 575-cysteine 594. Residues 602-629 (ASLTSDDEDEGADDEDSAEGSADQMLVF) form a disordered region. A compositionally biased stretch (acidic residues) spans 606-619 (SDDEDEGADDEDSA). Residues 620–629 (EGSADQMLVF) are compositionally biased toward low complexity.

In terms of assembly, interacts (in heparan sulfate-bound form) with wg. Contains heparan sulfate O-linked oligosaccharides. In terms of tissue distribution, in the wing disk, detected throughout the disk where it is localized primarily to the apical surface but is also present at the basal surface (at protein level).

It is found in the secreted. Its function is as follows. Binds to the Wnt signaling protein wg, stabilizes it and promotes its extracellular distribution. This is required for establishment of a wg gradient during development to allow for regulation of target genes at different levels. The protein is Proteoglycan Cow of Drosophila melanogaster (Fruit fly).